The sequence spans 141 residues: HTH-type transcriptional repressor NsrR (141 aa).

The 128-residue stretch at 2-129 (QLTSFTDYGL…DNYTLADLVE (128 aa)) folds into the HTH rrf2-type domain. The segment at residues 28-51 (ISEVTDVYGVSRNHMVKIINQLSR) is a DNA-binding region (H-T-H motif). Positions 91, 96, and 102 each coordinate [2Fe-2S] cluster.

[2Fe-2S] cluster is required as a cofactor.

Functionally, nitric oxide-sensitive repressor of genes involved in protecting the cell against nitrosative stress. May require iron for activity. This Escherichia fergusonii (strain ATCC 35469 / DSM 13698 / CCUG 18766 / IAM 14443 / JCM 21226 / LMG 7866 / NBRC 102419 / NCTC 12128 / CDC 0568-73) protein is HTH-type transcriptional repressor NsrR.